We begin with the raw amino-acid sequence, 212 residues long: Phosphoribosylglycinamide formyltransferase (212 aa).

Residue 12-14 coordinates N(1)-(5-phospho-beta-D-ribosyl)glycinamide; the sequence is GTN. Residues 90–93 and asparagine 107 each bind (6R)-10-formyltetrahydrofolate; that span reads MKIL. Residue histidine 109 is the Proton donor of the active site.

The protein belongs to the GART family.

The enzyme catalyses N(1)-(5-phospho-beta-D-ribosyl)glycinamide + (6R)-10-formyltetrahydrofolate = N(2)-formyl-N(1)-(5-phospho-beta-D-ribosyl)glycinamide + (6S)-5,6,7,8-tetrahydrofolate + H(+). Its pathway is purine metabolism; IMP biosynthesis via de novo pathway; N(2)-formyl-N(1)-(5-phospho-D-ribosyl)glycinamide from N(1)-(5-phospho-D-ribosyl)glycinamide (10-formyl THF route): step 1/1. Its function is as follows. Catalyzes the transfer of a formyl group from 10-formyltetrahydrofolate to 5-phospho-ribosyl-glycinamide (GAR), producing 5-phospho-ribosyl-N-formylglycinamide (FGAR) and tetrahydrofolate. The protein is Phosphoribosylglycinamide formyltransferase of Haemophilus influenzae (strain ATCC 51907 / DSM 11121 / KW20 / Rd).